We begin with the raw amino-acid sequence, 46 residues long: Large ribosomal subunit protein bL36A (46 aa).

The protein belongs to the bacterial ribosomal protein bL36 family.

This chain is Large ribosomal subunit protein bL36A, found in Sodalis glossinidius (strain morsitans).